The primary structure comprises 358 residues: Aromatic amino acid aminotransferase (358 aa).

Residue lysine 214 is modified to N6-(pyridoxal phosphate)lysine.

This sequence belongs to the class-II pyridoxal-phosphate-dependent aminotransferase family. Homodimer. Pyridoxal 5'-phosphate is required as a cofactor.

The catalysed reaction is an aromatic L-alpha-amino acid + 2-oxoglutarate = an aromatic oxo-acid + L-glutamate. In terms of biological role, aminotransferase that catalyzes the conversion of aromatic amino acids and 2-oxoglutarate into corresponding aromatic oxo acids and L-glutamate. The protein is Aromatic amino acid aminotransferase of Rhodococcus erythropolis (strain PR4 / NBRC 100887).